We begin with the raw amino-acid sequence, 65 residues long: Large ribosomal subunit protein bL31 (65 aa).

Cys-16, Cys-18, Cys-36, and Cys-39 together coordinate Zn(2+).

This sequence belongs to the bacterial ribosomal protein bL31 family. Type A subfamily. As to quaternary structure, part of the 50S ribosomal subunit. It depends on Zn(2+) as a cofactor.

Functionally, binds the 23S rRNA. This chain is Large ribosomal subunit protein bL31, found in Brevibacillus brevis (strain 47 / JCM 6285 / NBRC 100599).